A 610-amino-acid chain; its full sequence is MNSQELKKRQENIRNFSIIAHIDHGKSTLADRILEKTETVSSREMQAQLLDSMDLERERGITIKLNAIELNYKAKNGQDYIFHLIDTPGHVDFTYEVSRSLAACEGAVLVVDAAQGIEAQTLANVYLALDNDLEILPVINKIDLPAADPERVRQEIEDVIGLDASEAVLASAKSGIGIEDILEQIVEKVPAPSGDVDQPLQALIFDSVYDAYRGVILQVRVVNGMVKPGDTIQMMSNGKTFDVTEVGIFTPKAIGRDFLATGDVGYIAASIKTVADTRVGDTVTLATNPAAEPLHGYKQMNPMVFAGIYPIESNKYNDLREALEKLQLNDASLQFEPETSQALGFGFRCGFLGLLHMDVIQERLEREFNIDLIMTAPSVVYHVNITDGDMLEVSNPSEFPDPTKVDSIEEPYVKAQIMVPQEFVGAVMELAQRKRGDFVTMDYIDDNRVNVIYHIPLAEIVFDFFDKLKSSTRGYASFDYEIAEYRRSQLVKMDILLNGDKVDALSFIVHRAFAYERGKLIVEKLKKIIPRQQFEVPIQAAIGQKIVARSDIKALRKNVLAKCYGGDVSRKRKLLEKQKAGKKRMKAIGSVEVPQEAFLSVLSMDDESKK.

The 183-residue stretch at 11-193 (ENIRNFSIIA…QIVEKVPAPS (183 aa)) folds into the tr-type G domain. Residues 23–28 (DHGKST) and 140–143 (NKID) each bind GTP.

It belongs to the TRAFAC class translation factor GTPase superfamily. Classic translation factor GTPase family. LepA subfamily.

The protein localises to the cell membrane. The enzyme catalyses GTP + H2O = GDP + phosphate + H(+). In terms of biological role, required for accurate and efficient protein synthesis under certain stress conditions. May act as a fidelity factor of the translation reaction, by catalyzing a one-codon backward translocation of tRNAs on improperly translocated ribosomes. Back-translocation proceeds from a post-translocation (POST) complex to a pre-translocation (PRE) complex, thus giving elongation factor G a second chance to translocate the tRNAs correctly. Binds to ribosomes in a GTP-dependent manner. The polypeptide is Elongation factor 4 (Streptococcus equi subsp. equi (strain 4047)).